A 1028-amino-acid chain; its full sequence is Pro-apoptotic serine protease nma111 (1028 aa).

Positions 1-45 (MDMSGESSIKRRRSSIAASAERPAKHLRPENSTLTPGDATPANGT) are disordered. The segment at 82-266 (VVSIHFCQTC…AATDYFLPLD (185 aa)) is serine protease. Active-site charge relay system residues include H120, D151, and S233. 2 consecutive PDZ domains span residues 289-374 (QWIL…LLVQ) and 876-957 (VFCG…VTFD).

Belongs to the peptidase S1C family.

It localises to the nucleus. In terms of biological role, nuclear serine protease which mediates apoptosis. This is Pro-apoptotic serine protease nma111 (nma111) from Aspergillus clavatus (strain ATCC 1007 / CBS 513.65 / DSM 816 / NCTC 3887 / NRRL 1 / QM 1276 / 107).